The sequence spans 451 residues: E3 ubiquitin-protein ligase trul-1 (451 aa).

The RING-type; atypical zinc finger occupies 13–54 (CSICFEDLKQNDKISAIVCGHIYHHGCISQWIATKRQCPSCR). 2 coiled-coil regions span residues 96–130 (LKVE…EKDK) and 209–243 (NKDL…DAAI). Disordered regions lie at residues 270–297 (RDVL…MIDP) and 389–442 (KIPN…SSTS). Positions 427 to 442 (STRISSFFSRTTSSTS) are enriched in low complexity.

The protein belongs to the TRAIP family.

The protein resides in the nucleus. It localises to the chromosome. The catalysed reaction is S-ubiquitinyl-[E2 ubiquitin-conjugating enzyme]-L-cysteine + [acceptor protein]-L-lysine = [E2 ubiquitin-conjugating enzyme]-L-cysteine + N(6)-ubiquitinyl-[acceptor protein]-L-lysine.. Its pathway is protein modification; protein ubiquitination. Functionally, E3 ubiquitin ligase that acts as a key regulator of DNA repair in response to replication stress. Acts by mediating ubiquitination of the CMG helicase complex, promoting the unloading of the CMG helicase complex by the p97 ATPase (cdc-48.1 or cdc-48.2). In Caenorhabditis elegans, this protein is E3 ubiquitin-protein ligase trul-1.